The following is a 391-amino-acid chain: MGYPEVERREPLPAAAPRERGSQGCGCRGAPARAGEGNSCRLFLGFFGLSLALHLLTLCCYLELRSELRRERGTESRLGGPGAPGTSGTLSSPGSLDPVGPITRHLGQPSFQQQPLEPGEDPLPPDSQDRHQMALLNFFFPDEKAYSEEESRRVRRNKRSKSGEGADGPVKNKKKGKKAGPPGPNGPPGPPGPPGPQGPPGIPGIPGIPGTTVMGPPGPPGPPGPQGPPGLQGPSGAADKTGTRENQPAVVHLQGQGSAIQVKNDLSGGVLNDWSRITMNPKVFKLHPRSGELEVLVDGTYFIYSQVEVYYINFTDFASYEVVVDEKPFLQCTRSIETGKTNYNTCYTAGVCLLKARQKIAVKMVHADISINMSKHTTFFGAIRLGEAPAS.

Residues 1 to 21 (MGYPEVERREPLPAAAPRERG) are compositionally biased toward basic and acidic residues. The tract at residues 1–28 (MGYPEVERREPLPAAAPRERGSQGCGCR) is disordered. Residues 1 to 41 (MGYPEVERREPLPAAAPRERGSQGCGCRGAPARAGEGNSCR) are Cytoplasmic-facing. The chain crosses the membrane as a helical; Signal-anchor for type II membrane protein span at residues 42-62 (LFLGFFGLSLALHLLTLCCYL). At 63–391 (ELRSELRRER…AIRLGEAPAS (329 aa)) the chain is on the extracellular side. 2 disordered regions span residues 72–129 (RGTE…DSQD) and 146–244 (YSEE…TGTR). Over residues 86 to 96 (TSGTLSSPGSL) the composition is skewed to low complexity. The Collagen-like domain occupies 180–229 (GPPGPNGPPGPPGPPGPQGPPGIPGIPGIPGTTVMGPPGPPGPPGPQGPP). Pro residues-rich tracts occupy residues 181 to 203 (PPGPNGPPGPPGPPGPQGPPGIP) and 216 to 228 (PPGPPGPPGPQGP). Residues 249–385 (AVVHLQGQGS…HTTFFGAIRL (137 aa)) form the THD domain. N313 carries an N-linked (GlcNAc...) asparagine glycan. The cysteines at positions 332 and 346 are disulfide-linked. Residue N372 is glycosylated (N-linked (GlcNAc...) asparagine).

This sequence belongs to the tumor necrosis factor family. As to quaternary structure, homotrimer. The homotrimers may then dimerize and form higher-order oligomers. N-glycosylated. Post-translationally, processing by furin produces a secreted form.

It localises to the cell membrane. The protein resides in the secreted. In terms of biological role, cytokine which is involved in epithelial-mesenchymal signaling during morphogenesis of ectodermal organs. Functions as a ligand activating the DEATH-domain containing receptors EDAR and EDA2R. Isoform TAA binds only to the receptor EDAR, while isoform TA-A2 binds exclusively to the receptor EDA2R. May also play a role in cell adhesion. Isoform TAA binds only to the receptor EDAR, while isoform TA-A2 binds exclusively to the receptor EDA2R. Functionally, isoform TA-A2 binds exclusively to the receptor EDA2R. This chain is Ectodysplasin-A (Eda), found in Mus musculus (Mouse).